The chain runs to 566 residues: Protein RocB (566 aa).

In terms of biological role, involved in arginine degradative pathway. This is Protein RocB (rocB) from Bacillus subtilis (strain 168).